Here is a 90-residue protein sequence, read N- to C-terminus: UPF0223 protein lmo1058 (90 aa).

Belongs to the UPF0223 family.

The protein is UPF0223 protein lmo1058 of Listeria monocytogenes serovar 1/2a (strain ATCC BAA-679 / EGD-e).